Here is a 344-residue protein sequence, read N- to C-terminus: DNA-directed RNA polymerase subunit alpha (344 aa).

The interval 1–238 (MKVIKTAPLI…KQLGVFGEKP (238 aa)) is alpha N-terminal domain (alpha-NTD). An alpha C-terminal domain (alpha-CTD) region spans residues 253 to 344 (DAKDLSAKIE…EKLEDKGGND (92 aa)).

Belongs to the RNA polymerase alpha chain family. Homodimer. The RNAP catalytic core consists of 2 alpha, 1 beta, 1 beta' and 1 omega subunit. When a sigma factor is associated with the core the holoenzyme is formed, which can initiate transcription.

It catalyses the reaction RNA(n) + a ribonucleoside 5'-triphosphate = RNA(n+1) + diphosphate. In terms of biological role, DNA-dependent RNA polymerase catalyzes the transcription of DNA into RNA using the four ribonucleoside triphosphates as substrates. The chain is DNA-directed RNA polymerase subunit alpha from Helicobacter acinonychis (strain Sheeba).